The following is a 194-amino-acid chain: ATP-dependent Clp protease proteolytic subunit (194 aa).

The active-site Nucleophile is the Ser99. His124 is an active-site residue.

Belongs to the peptidase S14 family. As to quaternary structure, fourteen ClpP subunits assemble into 2 heptameric rings which stack back to back to give a disk-like structure with a central cavity, resembling the structure of eukaryotic proteasomes.

It localises to the cytoplasm. It catalyses the reaction Hydrolysis of proteins to small peptides in the presence of ATP and magnesium. alpha-casein is the usual test substrate. In the absence of ATP, only oligopeptides shorter than five residues are hydrolyzed (such as succinyl-Leu-Tyr-|-NHMec, and Leu-Tyr-Leu-|-Tyr-Trp, in which cleavage of the -Tyr-|-Leu- and -Tyr-|-Trp bonds also occurs).. In terms of biological role, cleaves peptides in various proteins in a process that requires ATP hydrolysis. Has a chymotrypsin-like activity. Plays a major role in the degradation of misfolded proteins. In Clostridium perfringens (strain ATCC 13124 / DSM 756 / JCM 1290 / NCIMB 6125 / NCTC 8237 / Type A), this protein is ATP-dependent Clp protease proteolytic subunit.